We begin with the raw amino-acid sequence, 619 residues long: Probable galacturonosyltransferase 7 (619 aa).

Residues 1 to 19 are Cytoplasmic-facing; that stretch reads MKGGGGGGGGGGGGKRRWK. Residues 20–40 traverse the membrane as a helical; Signal-anchor for type II membrane protein segment; that stretch reads VLVIGVLVLVILSMLVPLAFL. Residues 41 to 619 lie on the Lumenal side of the membrane; the sequence is LGLHNGFHSP…RFLSDCNVNP (579 aa). N-linked (GlcNAc...) asparagine glycans are attached at residues Asn68, Asn106, Asn132, Asn343, and Asn421. The interval 95-139 is disordered; sequence KSDINVGSRDVNATSGTDSKKRGLPVSPTVVANPSPANKTKSEAS. The segment covering 124–139 has biased composition (polar residues); that stretch reads VVANPSPANKTKSEAS.

The protein belongs to the glycosyltransferase 8 family. As to expression, expressed in roots, inflorescences, flowers, siliques, leaves and stems.

It is found in the golgi apparatus membrane. The protein operates within glycan metabolism; pectin biosynthesis. Functionally, may be involved in pectin biosynthesis. This Arabidopsis thaliana (Mouse-ear cress) protein is Probable galacturonosyltransferase 7 (GAUT7).